A 91-amino-acid polypeptide reads, in one-letter code: Small ribosomal subunit protein bS16c (91 aa).

The protein belongs to the bacterial ribosomal protein bS16 family.

The protein resides in the plastid. Its subcellular location is the chloroplast. The protein is Small ribosomal subunit protein bS16c of Vitis vinifera (Grape).